The primary structure comprises 564 residues: H/ACA ribonucleoprotein complex non-core subunit NAF1 (564 aa).

5 disordered regions span residues 1–29, 108–218, 238–264, 387–489, and 538–564; these read MESEQPAAVKASAPIEEPQSTETAVELGK, LVVQ…DSEG, DEDDEDFDEDGATGDRSRRRQPPKVRG, ASWE…HPSY, and PHMYPPPPPFAPPPPNNQSHQGQPPPS. Over residues 146–157 the composition is skewed to low complexity; that stretch reads ASGLSLLAAYSS. Over residues 238–249 the composition is skewed to acidic residues; that stretch reads DEDDEDFDEDGA. Residue T250 is modified to Phosphothreonine. S254 carries the post-translational modification Phosphoserine. Residues 388 to 402 are compositionally biased toward basic and acidic residues; sequence SWEHDVEPPARYVDH. A Phosphoserine modification is found at S403. Over residues 426-446 the composition is skewed to low complexity; that stretch reads STDSVDTVTSVATTATKASSV. T427 carries the post-translational modification Phosphothreonine. At S429 the chain carries Phosphoserine. A Phosphothreonine modification is found at T432. Residues 468-489 are compositionally biased toward polar residues; the sequence is PSINQHNQNQPQDEQYNFHPSY. The span at 538 to 553 shows a compositional bias: pro residues; it reads PHMYPPPPPFAPPPPN. Polar residues predominate over residues 554-564; that stretch reads NQSHQGQPPPS.

It belongs to the NAF1 family. As to quaternary structure, during assembly of the complex, component of the box H/ACA small nucleolar ribonucleoprotein (H/ACA snoRNP) complex.

It localises to the nucleus. Its function is as follows. RNA-binding protein required for the maturation of the box H/ACA small nucleolar ribonucleoprotein (H/ACA snoRNP) complex and ribosome biogenesis. During assembly of the H/ACA snoRNP complex it associates with the complex and dissociates during complex maturation, becoming replaced by Gar1 to yield mature H/ACA snoRNP complex. The protein is H/ACA ribonucleoprotein complex non-core subunit NAF1 of Drosophila melanogaster (Fruit fly).